A 155-amino-acid polypeptide reads, in one-letter code: Protein-export protein SecB (155 aa).

The protein belongs to the SecB family. As to quaternary structure, homotetramer, a dimer of dimers. One homotetramer interacts with 1 SecA dimer.

The protein localises to the cytoplasm. Its function is as follows. One of the proteins required for the normal export of preproteins out of the cell cytoplasm. It is a molecular chaperone that binds to a subset of precursor proteins, maintaining them in a translocation-competent state. It also specifically binds to its receptor SecA. In Paramagnetospirillum magneticum (strain ATCC 700264 / AMB-1) (Magnetospirillum magneticum), this protein is Protein-export protein SecB.